We begin with the raw amino-acid sequence, 330 residues long: Anthranilate phosphoribosyltransferase (330 aa).

Residues G79, 82-83 (GD), T87, 89-92 (NIST), 107-115 (KHGNYGVSS), and S119 contribute to the 5-phospho-alpha-D-ribose 1-diphosphate site. G79 is a binding site for anthranilate. S91 provides a ligand contact to Mg(2+). N110 contributes to the anthranilate binding site. Residue R165 participates in anthranilate binding. The Mg(2+) site is built by D223 and E224.

Belongs to the anthranilate phosphoribosyltransferase family. As to quaternary structure, homodimer. Mg(2+) serves as cofactor.

The enzyme catalyses N-(5-phospho-beta-D-ribosyl)anthranilate + diphosphate = 5-phospho-alpha-D-ribose 1-diphosphate + anthranilate. Its pathway is amino-acid biosynthesis; L-tryptophan biosynthesis; L-tryptophan from chorismate: step 2/5. Its function is as follows. Catalyzes the transfer of the phosphoribosyl group of 5-phosphorylribose-1-pyrophosphate (PRPP) to anthranilate to yield N-(5'-phosphoribosyl)-anthranilate (PRA). The chain is Anthranilate phosphoribosyltransferase from Flavobacterium johnsoniae (strain ATCC 17061 / DSM 2064 / JCM 8514 / BCRC 14874 / CCUG 350202 / NBRC 14942 / NCIMB 11054 / UW101) (Cytophaga johnsonae).